The chain runs to 463 residues: MTKPFSVVLASLLAITSTISPLASAQQSQPLDRIAAIVDEDVVLQSELDRAVRNVKSQYAGRENQLPPDDVLQRQVLERLILVKLQVGRADGSGIRVSDEELNRAIASIAQQNGTTVDGLRQKLAADGMGYADFRASVRDEIIVQRLRQSFAQSRISVSEGEVDTALTQQAATGSKYHLAHILIGLPEGATAEQIATGQKKVDGVKALIDKGELDFPAAAVRYSDSPNALEGGDLGWRSLDEIPNAFAQLIRDMKPGQVAGPLRGPSGFQLLKLMEMRDANAGGEKKMVTEYNARHILVRVGDNQTEAQAKAKIDTIRARIVGGADFQATAKESSEDTNSRGQGGDLGWFPADAFGPDFGKQVEGLADGAVSEPFRTQAGWHIVQRVGSRQTDVSAENQRAQVRETIGRRKLEEEYNRYLQELRGEAYVSYRTGDRADNNATAAPAKSADPALPAPPPAKPTR.

Residues 1–25 (MTKPFSVVLASLLAITSTISPLASA) form the signal peptide. 2 consecutive PpiC domains span residues 174–276 (GSKY…KLME) and 289–388 (VTEY…QRVG). 2 disordered regions span residues 329–348 (ATAK…GDLG) and 434–463 (GDRA…KPTR). The segment covering 439-452 (NNATAAPAKSADPA) has biased composition (low complexity). The segment covering 453-463 (LPAPPPAKPTR) has biased composition (pro residues).

It is found in the periplasm. The catalysed reaction is [protein]-peptidylproline (omega=180) = [protein]-peptidylproline (omega=0). Functionally, chaperone involved in the correct folding and assembly of outer membrane proteins. Recognizes specific patterns of aromatic residues and the orientation of their side chains, which are found more frequently in integral outer membrane proteins. May act in both early periplasmic and late outer membrane-associated steps of protein maturation. This chain is Chaperone SurA, found in Xanthomonas oryzae pv. oryzae (strain KACC10331 / KXO85).